The sequence spans 295 residues: uncharacterized protein (295 aa).

Residues Met-1–Ala-19 form the signal peptide.

This is an uncharacterized protein from Rickettsia conorii (strain ATCC VR-613 / Malish 7).